Consider the following 862-residue polypeptide: MAMESSIVIKVKYEETLRRFNACVINEKLDLDIGGLRDKIIQLFNFAHDAELTLTYIDEDGDVVTLVDDEDLQDVMRQDLNPLRISARLNAGERSGRASARSSGNSTPLRSPRVQPPFLNLNSRVSDVLKYIPEPLRESVMKVCSDMTASASSSAPILAELVDAMSEMGLSYYQNQASGSQAVKEAGSCSGISKGNTKSADGGMPNVKIGESSPKKNRPLTALHGEPKPNASNEAVDASVKLVCKSETLEGDRTEDLSSSFKGSKAQTSLVNSLEKDKKFDVRSLDGRTIGYAYVRNSPIPPEKTSDEQPSKGHPVAKPVDLGGSASSSKVKQCNWDSPNADSSGSSINMPYDGFTPSGLVHLNTVNVNDSHNAGSSGSSMKMPYDGFRPAVRHLGPLIPVNACPFSGVPTVNNPIPPQNFSFEVPLKRSHNHSDGTGTIFHKGVRCDGCGVHPITGPRFISKVKENYDLCSICFAEMGNDADYIRMDRPLTYPNPWSFKSLHDLHGRLRPRPPTVPQVIRGFGLKAGRPKLDSRFIQDVNVLDGTIMAPLTRFTKIWRMKNNGNLVWPQGTQLVWIGGDKLSDRFSVELEITTAGLAVDQELDVAVDFTAPEHPGRYISYWRLASASGQKFGQRVWVLIQVDALLSVPKKGLVHEAFQGLNLNLPPAGSGVSGPDIINVNSEPQNVLPEPKSSSTMELVDSVAEVNQNKEQEAKFPINDSLLVGFGDKSSSPSASGSPISYPVIDLTEKPSADSSMQPSAAVAMQAPLQDARGNFEVEMSLLQELEEMGFKQVDLNKEILRKNEYDLEQSVDDLCGVAEWDPILEELKEMGFCDKEMNKKLLKKNNGSIKRVVMDLIAGEQ.

The 85-residue stretch at 6-90 (SIVIKVKYEE…NPLRISARLN (85 aa)) folds into the PB1 domain. Low complexity predominate over residues 92–106 (GERSGRASARSSGNS). 3 disordered regions span residues 92–117 (GERS…VQPP), 194–234 (KGNT…ASNE), and 295–345 (VRNS…DSSG). A compositionally biased stretch (polar residues) spans 325–345 (SASSSKVKQCNWDSPNADSSG). The ZZ-type; degenerate zinc finger occupies 442–492 (HKGVRCDGCGVHPITGPRFISKVKENYDLCSICFAEMGNDADYIRMDRPLT). Cysteine 447, cysteine 450, cysteine 471, and cysteine 474 together coordinate Zn(2+). The UBA domain occupies 811–860 (SVDDLCGVAEWDPILEELKEMGFCDKEMNKKLLKKNNGSIKRVVMDLIAG). The ATG8 interacting motif (AIM) signature appears at 817–824 (GVAEWDPI).

As to quaternary structure, interacts (via C-terminal AIM motif) with ATG8CL.

Its subcellular location is the vacuole. The protein localises to the cytoplasmic vesicle. The protein resides in the autophagosome. Autophagic substrate that functions as a host autophagy cargo receptor. Requires ATG8 protein expression to be recognized as an autophagic substrate. Activates ATG8CL-mediated selective autophagy, and contributes to defense against the fungal pathogen Phytophtora infestans. The polypeptide is Protein JOKA2 (Solanum tuberosum (Potato)).